The chain runs to 160 residues: ATP synthase subunit b (160 aa).

The chain crosses the membrane as a helical span at residues Val13–Ile33.

It belongs to the ATPase B chain family. F-type ATPases have 2 components, F(1) - the catalytic core - and F(0) - the membrane proton channel. F(1) has five subunits: alpha(3), beta(3), gamma(1), delta(1), epsilon(1). F(0) has four main subunits: a(1), b(1), b'(1) and c(10-14). The alpha and beta chains form an alternating ring which encloses part of the gamma chain. F(1) is attached to F(0) by a central stalk formed by the gamma and epsilon chains, while a peripheral stalk is formed by the delta, b and b' chains.

Its subcellular location is the cellular thylakoid membrane. In terms of biological role, f(1)F(0) ATP synthase produces ATP from ADP in the presence of a proton or sodium gradient. F-type ATPases consist of two structural domains, F(1) containing the extramembraneous catalytic core and F(0) containing the membrane proton channel, linked together by a central stalk and a peripheral stalk. During catalysis, ATP synthesis in the catalytic domain of F(1) is coupled via a rotary mechanism of the central stalk subunits to proton translocation. Component of the F(0) channel, it forms part of the peripheral stalk, linking F(1) to F(0). The protein is ATP synthase subunit b of Parasynechococcus marenigrum (strain WH8102).